The primary structure comprises 636 residues: Chaperone protein DnaK (636 aa).

T198 carries the post-translational modification Phosphothreonine; by autocatalysis. A disordered region spans residues 602 to 636 (QAEGAQPGGEAAGEASAKDEKVVDADFEEVKDDKK). Residues 626–636 (ADFEEVKDDKK) show a composition bias toward acidic residues.

This sequence belongs to the heat shock protein 70 family.

In terms of biological role, acts as a chaperone. The polypeptide is Chaperone protein DnaK (Geobacter sulfurreducens (strain ATCC 51573 / DSM 12127 / PCA)).